A 310-amino-acid polypeptide reads, in one-letter code: Regulator of microtubule dynamics protein 1 (310 aa).

Residue lysine 165 is modified to N6-succinyllysine. TPR repeat units lie at residues 168-204 and 222-258; these read AICISDVGDYEGIKVKIANAYVIKEHFEKAIELNPKD and PWYQRRIAEVLFANPPSSTYEEALKYFHRAEEVDPNF.

Belongs to the RMDN family. In terms of assembly, interacts with microtubules.

It localises to the cytoplasm. The protein resides in the cytoskeleton. It is found in the spindle. Its subcellular location is the spindle pole. The chain is Regulator of microtubule dynamics protein 1 (Rmdn1) from Rattus norvegicus (Rat).